A 319-amino-acid polypeptide reads, in one-letter code: HTH-type transcriptional regulator YidZ (319 aa).

Residues leucine 8–threonine 65 form the HTH lysR-type domain. The segment at residues valine 25–alanine 44 is a DNA-binding region (H-T-H motif).

It belongs to the LysR transcriptional regulatory family.

Involved in anaerobic NO protection. The sequence is that of HTH-type transcriptional regulator YidZ from Escherichia coli O6:H1 (strain CFT073 / ATCC 700928 / UPEC).